The primary structure comprises 552 residues: Phosphoglucomutase (552 aa).

Ser-143 (phosphoserine intermediate) is an active-site residue. The Mg(2+) site is built by Ser-143, Asp-295, Asp-297, and Asp-299.

The protein belongs to the phosphohexose mutase family. Mg(2+) serves as cofactor.

It carries out the reaction alpha-D-glucose 1-phosphate = alpha-D-glucose 6-phosphate. The protein operates within glycolipid metabolism; diglucosyl-diacylglycerol biosynthesis. Catalyzes the interconversion between glucose-6-phosphate and alpha-glucose-1-phosphate. This is the first step in the biosynthesis of diglucosyl-diacylglycerol (Glc2-DAG), i.e. the predominant glycolipid found in the S.aureus membrane, which is also used as a membrane anchor for lipoteichoic acid (LTA). This Staphylococcus aureus (strain USA300) protein is Phosphoglucomutase (pgcA).